The primary structure comprises 556 residues: Glucose-6-phosphate isomerase (556 aa).

Glu-360 (proton donor) is an active-site residue. Residues His-391 and Lys-519 contribute to the active site.

The protein belongs to the GPI family.

It localises to the cytoplasm. The enzyme catalyses alpha-D-glucose 6-phosphate = beta-D-fructose 6-phosphate. The protein operates within carbohydrate biosynthesis; gluconeogenesis. It functions in the pathway carbohydrate degradation; glycolysis; D-glyceraldehyde 3-phosphate and glycerone phosphate from D-glucose: step 2/4. Its function is as follows. Catalyzes the reversible isomerization of glucose-6-phosphate to fructose-6-phosphate. The protein is Glucose-6-phosphate isomerase of Acinetobacter baumannii (strain AB0057).